Reading from the N-terminus, the 982-residue chain is NACHT, LRR and PYD domains-containing protein 4C (982 aa).

A Pyrin domain is found at 1–93 (MASFFSDFGL…MERAGREIAG (93 aa)). Residues 148–471 (HMVFLQGAAG…FYLLKSHMDH (324 aa)) form the NACHT domain. Position 154–161 (154–161 (GAAGIGKS)) interacts with ATP. LRR repeat units lie at residues 594–617 (CSTL…HSYT), 689–716 (NQCL…VLSQ), 746–773 (SKML…LCHP), 802–825 (NKTL…VLCG), 827–844 (LSLP…YCLI), 859–882 (NQNL…LLCD), and 916–940 (CKTL…LFEA).

The protein belongs to the NLRP family.

May be involved in inflammation and recognition of cytosolic pathogen-associated molecular patterns (PAMPs) not intercepted by membrane-bound receptors. In Mus musculus (Mouse), this protein is NACHT, LRR and PYD domains-containing protein 4C (Nlrp4c).